The primary structure comprises 64 residues: MRLHHLLLTLLFLVLSAGSGFTQGISNPLSCRLNRGICVPIRCPGNLRQIGTCFTPSVKCCRWR.

The N-terminal stretch at 1–26 (MRLHHLLLTLLFLVLSAGSGFTQGIS) is a signal peptide. Intrachain disulfides connect cysteine 31-cysteine 60, cysteine 38-cysteine 53, and cysteine 43-cysteine 61.

The protein belongs to the beta-defensin family. LAP/TAP subfamily. Inducibly expressed in enteric epithelial cells.

The protein resides in the secreted. Functionally, has antibacterial activity. The chain is Enteric beta-defensin (EBD) from Bos taurus (Bovine).